Consider the following 290-residue polypeptide: Small ribosomal subunit biogenesis GTPase RsgA (290 aa).

Residues 62 to 219 (RTCLKRPAVA…VADTPGFSRL (158 aa)) enclose the CP-type G domain. GTP-binding positions include 111-114 (NKAD) and 161-169 (GPSGVGKSS). Zn(2+) is bound by residues C243, C248, H250, and C256.

The protein belongs to the TRAFAC class YlqF/YawG GTPase family. RsgA subfamily. In terms of assembly, monomer. Associates with 30S ribosomal subunit, binds 16S rRNA. It depends on Zn(2+) as a cofactor.

The protein localises to the cytoplasm. Functionally, one of several proteins that assist in the late maturation steps of the functional core of the 30S ribosomal subunit. Helps release RbfA from mature subunits. May play a role in the assembly of ribosomal proteins into the subunit. Circularly permuted GTPase that catalyzes slow GTP hydrolysis, GTPase activity is stimulated by the 30S ribosomal subunit. This is Small ribosomal subunit biogenesis GTPase RsgA from Moorella thermoacetica (strain ATCC 39073 / JCM 9320).